The following is a 220-amino-acid chain: MATTASPFLSPAKLSLERRLPRATWTARRSVRFPPVRAQDQQQQVKEEEEEAAVENLPPPPQEEEQRRERKTRRQGPAQPLPVQPLAESKNMSREYGGQWLSCTTRHIRIYAAYINPETNAFDQTQMDKLTLLLDPTDEFVWTDETCQKVYDEFQDLVDHYEGAELSEYTLRLIGSDLEHFIRKLLYDGEIKYNMMSRVLNFSMGKPRIKFNSSQIPDVK.

Residues Met-1–Arg-37 constitute a chloroplast transit peptide. Positions Leu-20 to Asn-91 are disordered. Positions Pro-34–Gln-44 are enriched in low complexity.

The protein belongs to the NDH complex subunit M family. As to quaternary structure, part of the chloroplast NDH complex, composed of a mixture of chloroplast and nucleus encoded subunits. Component of the NDH subcomplex A, at least composed of ndhH, ndhI, ndhJ, ndhK, ndhL, ndhM, ndhN and ndhO.

It localises to the plastid. The protein localises to the chloroplast thylakoid membrane. The catalysed reaction is a plastoquinone + NADH + (n+1) H(+)(in) = a plastoquinol + NAD(+) + n H(+)(out). It catalyses the reaction a plastoquinone + NADPH + (n+1) H(+)(in) = a plastoquinol + NADP(+) + n H(+)(out). Its function is as follows. NDH shuttles electrons from NAD(P)H:plastoquinone, via FMN and iron-sulfur (Fe-S) centers, to quinones in the photosynthetic chain and possibly in a chloroplast respiratory chain. The immediate electron acceptor for the enzyme in this species is believed to be plastoquinone. Couples the redox reaction to proton translocation, and thus conserves the redox energy in a proton gradient. This Oryza sativa subsp. indica (Rice) protein is NAD(P)H-quinone oxidoreductase subunit M, chloroplastic.